Consider the following 105-residue polypeptide: Large ribosomal subunit protein bL21 (105 aa).

It belongs to the bacterial ribosomal protein bL21 family. As to quaternary structure, part of the 50S ribosomal subunit. Contacts protein L20.

This protein binds to 23S rRNA in the presence of protein L20. The chain is Large ribosomal subunit protein bL21 from Aliarcobacter butzleri (strain RM4018) (Arcobacter butzleri).